Here is a 150-residue protein sequence, read N- to C-terminus: Endoribonuclease YbeY (150 aa).

H113, H117, and H123 together coordinate Zn(2+).

Belongs to the endoribonuclease YbeY family. The cofactor is Zn(2+).

It is found in the cytoplasm. Single strand-specific metallo-endoribonuclease involved in late-stage 70S ribosome quality control and in maturation of the 3' terminus of the 16S rRNA. The polypeptide is Endoribonuclease YbeY (Wolbachia sp. subsp. Drosophila simulans (strain wRi)).